We begin with the raw amino-acid sequence, 64 residues long: Makatoxin-1 (64 aa).

Residues 2 to 64 (RDAYIADSEN…VPIRISGSCR (63 aa)) enclose the LCN-type CS-alpha/beta domain. 4 disulfide bridges follow: Cys12/Cys63, Cys16/Cys36, Cys22/Cys46, and Cys26/Cys48.

As to expression, expressed by the venom gland.

It is found in the secreted. This protein markedly relaxes the rat carbachol-precontracted anococcygeus muscle. This relaxation is inhibited by the inhibitor of nitric oxide (NO) synthase, N-nitro-L-arginine methyl ester (L-NAME), suggesting that the response induced by this protein is NO-mediated. This is Makatoxin-1 from Olivierus martensii (Manchurian scorpion).